A 198-amino-acid polypeptide reads, in one-letter code: NAD(P)H dehydrogenase (quinone) (198 aa).

The 186-residue stretch at 4–189 (ILVLYYSMYG…SIARYQGEYV (186 aa)) folds into the Flavodoxin-like domain. FMN contacts are provided by residues 10 to 15 (SMYGHI) and 78 to 80 (TRF). Position 12 (Tyr-12) interacts with NAD(+). Residue Trp-98 coordinates substrate. FMN contacts are provided by residues 113-118 (STGTGG) and His-133.

This sequence belongs to the WrbA family. It depends on FMN as a cofactor.

The enzyme catalyses a quinone + NADH + H(+) = a quinol + NAD(+). It catalyses the reaction a quinone + NADPH + H(+) = a quinol + NADP(+). The polypeptide is NAD(P)H dehydrogenase (quinone) (Salmonella agona (strain SL483)).